The chain runs to 181 residues: MRIAFFLLILSIIVGLAYGYSCPKPCYGNMCCSTSPDHKYYLTDFCGSTSACGPKPSCSGKLYFTADSQRFGCGKHLNLCRGKKCVKAKVYDAGPAEWVEKDAGKMIIDASPTICHELTGGSSCGWSDKFEITATVTSLTDSRPLGPFNVTEEEMDQLFIDHEIAMAQCEAEKTCNGFDLE.

The signal sequence occupies residues 1 to 19 (MRIAFFLLILSIIVGLAYG). The propeptide occupies 139–181 (LTDSRPLGPFNVTEEEMDQLFIDHEIAMAQCEAEKTCNGFDLE).

Belongs to the dictyostelium lysozyme family. In terms of processing, contains six disulfide bonds.

Its subcellular location is the cytoplasmic vesicle lumen. The enzyme catalyses Hydrolysis of (1-&gt;4)-beta-linkages between N-acetylmuramic acid and N-acetyl-D-glucosamine residues in a peptidoglycan and between N-acetyl-D-glucosamine residues in chitodextrins.. Its function is as follows. Has antibacterial activity. This Dictyostelium discoideum (Social amoeba) protein is Lysozyme C (alyC).